Here is a 208-residue protein sequence, read N- to C-terminus: Small ribosomal subunit protein uS5 (208 aa).

Over residues 1 to 15 (MTDSNNQSPNKKTSG) the composition is skewed to polar residues. The segment at 1-54 (MTDSNNQSPNKKTSGSSSAPPAADGRQENRRSRGEKRGGRRDRRGQERDSEWQE) is disordered. 2 stretches are compositionally biased toward basic and acidic residues: residues 25–37 (GRQE…GEKR) and 44–54 (RGQERDSEWQE). One can recognise an S5 DRBM domain in the interval 52–115 (WQERVVQIRR…ADGKKHLVRV (64 aa)).

It belongs to the universal ribosomal protein uS5 family. As to quaternary structure, part of the 30S ribosomal subunit. Contacts proteins S4 and S8.

Functionally, with S4 and S12 plays an important role in translational accuracy. Its function is as follows. Located at the back of the 30S subunit body where it stabilizes the conformation of the head with respect to the body. The chain is Small ribosomal subunit protein uS5 from Prochlorococcus marinus (strain NATL2A).